A 370-amino-acid polypeptide reads, in one-letter code: S-adenosylmethionine decarboxylase proenzyme (370 aa).

Phe-28 lines the substrate pocket. Catalysis depends on residues Glu-29 and Glu-32. Residue Glu-85 participates in substrate binding. Catalysis depends on Ser-86, which acts as the Schiff-base intermediate with substrate; via pyruvic acid. A Pyruvic acid (Ser); by autocatalysis modification is found at Ser-86. The active-site Proton donor; for catalytic activity is the Cys-100. Residues Ser-249 and His-262 each act as proton acceptor; for processing activity in the active site. Glu-266 contributes to the substrate binding site.

This sequence belongs to the eukaryotic AdoMetDC family. In terms of assembly, forms a heterodimer with catalytically inactive AdoMetDC prozyme; heterodimerization is required to activate AdoMetDC. Requires pyruvate as cofactor. In terms of processing, is synthesized initially as an inactive proenzyme. Formation of the active enzyme involves a self-maturation process in which the active site pyruvoyl group is generated from an internal serine residue via an autocatalytic post-translational modification. Two non-identical subunits are generated from the proenzyme in this reaction, and the pyruvate is formed at the N-terminus of the alpha chain, which is derived from the carboxyl end of the proenzyme. The post-translation cleavage follows an unusual pathway, termed non-hydrolytic serinolysis, in which the side chain hydroxyl group of the serine supplies its oxygen atom to form the C-terminus of the beta chain, while the remainder of the serine residue undergoes an oxidative deamination to produce ammonia and the pyruvoyl group blocking the N-terminus of the alpha chain.

The enzyme catalyses S-adenosyl-L-methionine + H(+) = S-adenosyl 3-(methylsulfanyl)propylamine + CO2. It participates in amine and polyamine biosynthesis; S-adenosylmethioninamine biosynthesis; S-adenosylmethioninamine from S-adenosyl-L-methionine: step 1/1. With respect to regulation, allosterically activated by AdoMetDC prozyme. Activated by putrescine and to a lesser extent by spermidine, norspermidine and spermine. Inhibited by 5'-([(Z)-4-amino-2-butenyl]methylamino)-5'-deoxyadenosine (MDL 73811). Functionally, in association with the catalytically inactive AdoMetDC prozyme, catalyzes the decarboxylation of S-adenosyl-L-methionine which is essential for the biosynthesis of the polyamine spermidine. Required for growth and survival during the bloodstream life cycle stage. The sequence is that of S-adenosylmethionine decarboxylase proenzyme from Trypanosoma brucei brucei.